The sequence spans 306 residues: MSTLGHQYDNSLVSNAFGFLRLPMNFQPYDSDADWVITGVPFDMATSGRAGGRHGPAAIRQVSTNLAWEHNRFPWNFDMRERLNVVDCGDLVYAFGDAREMSEKLQAHAEKLLAAGKRMLSFGGDHFVTLPLLRAHAKHFGKMALVHFDAHTDTYANGCEFDHGTMFYTAPKEGLIDPNHSVQIGIRTEFDKDNGFTVLDACQVNDRSVDDVIAQVKQIVGDMSVYLTFDIDCLDPAFAPGTGTPVIGGLTSDRAIKLVRGLKDLNIVGMDVVEVAPAYDQSEITALAAATLALEMLYIQAAKKGE.

The Mn(2+) site is built by H126, D149, H151, D153, D230, and D232.

Belongs to the arginase family. Agmatinase subfamily. Requires Mn(2+) as cofactor.

The enzyme catalyses agmatine + H2O = urea + putrescine. It participates in amine and polyamine biosynthesis; putrescine biosynthesis via agmatine pathway; putrescine from agmatine: step 1/1. Its function is as follows. Catalyzes the formation of putrescine from agmatine. This is Agmatinase from Escherichia coli O9:H4 (strain HS).